We begin with the raw amino-acid sequence, 344 residues long: S-adenosylmethionine:tRNA ribosyltransferase-isomerase (344 aa).

This sequence belongs to the QueA family. Monomer.

The protein resides in the cytoplasm. It carries out the reaction 7-aminomethyl-7-carbaguanosine(34) in tRNA + S-adenosyl-L-methionine = epoxyqueuosine(34) in tRNA + adenine + L-methionine + 2 H(+). The protein operates within tRNA modification; tRNA-queuosine biosynthesis. Transfers and isomerizes the ribose moiety from AdoMet to the 7-aminomethyl group of 7-deazaguanine (preQ1-tRNA) to give epoxyqueuosine (oQ-tRNA). The polypeptide is S-adenosylmethionine:tRNA ribosyltransferase-isomerase (Rhizorhabdus wittichii (strain DSM 6014 / CCUG 31198 / JCM 15750 / NBRC 105917 / EY 4224 / RW1) (Sphingomonas wittichii)).